The sequence spans 250 residues: Thermostable monoacylglycerol lipase (250 aa).

Residue Phe-29 coordinates substrate. Ser-97 acts as the Nucleophile in catalysis. Residue Met-98 coordinates substrate. Residues Asp-196 and His-226 each act as charge relay system in the active site.

This sequence belongs to the lipase/esterase LIP3/BchO family. As to quaternary structure, monomer.

It carries out the reaction Hydrolyzes glycerol monoesters of long-chain fatty acids.. Its activity is regulated as follows. Not inhibited by cholate, but slightly inhibited by triton X-100 and deoxycholate. Completely inhibited by PMSF (phenylmethylsulfonyl fluoride) at a concentration of 200 uM. Hydrolyzes monoacylglycerols, with the highest activity occurring with 1-monolauroylglycerol. This chain is Thermostable monoacylglycerol lipase, found in Bacillus sp. (strain H-257).